The primary structure comprises 373 residues: CCA-adding enzyme (373 aa).

The ATP site is built by G8 and R11. Residues G8 and R11 each contribute to the CTP site. Positions 21 and 23 each coordinate Mg(2+). Residues R91, R137, and R140 each contribute to the ATP site. Positions 91, 137, and 140 each coordinate CTP.

This sequence belongs to the tRNA nucleotidyltransferase/poly(A) polymerase family. Bacterial CCA-adding enzyme type 2 subfamily. Requires Mg(2+) as cofactor.

It catalyses the reaction a tRNA precursor + 2 CTP + ATP = a tRNA with a 3' CCA end + 3 diphosphate. It carries out the reaction a tRNA with a 3' CCA end + 2 CTP + ATP = a tRNA with a 3' CCACCA end + 3 diphosphate. Functionally, catalyzes the addition and repair of the essential 3'-terminal CCA sequence in tRNAs without using a nucleic acid template. Adds these three nucleotides in the order of C, C, and A to the tRNA nucleotide-73, using CTP and ATP as substrates and producing inorganic pyrophosphate. tRNA 3'-terminal CCA addition is required both for tRNA processing and repair. Also involved in tRNA surveillance by mediating tandem CCA addition to generate a CCACCA at the 3' terminus of unstable tRNAs. While stable tRNAs receive only 3'-terminal CCA, unstable tRNAs are marked with CCACCA and rapidly degraded. This chain is CCA-adding enzyme, found in Marinobacter nauticus (strain ATCC 700491 / DSM 11845 / VT8) (Marinobacter aquaeolei).